The sequence spans 323 residues: Dolichyl-phosphate beta-glucosyltransferase ALG5A (323 aa).

Topologically, residues 1–5 (MKFWR) are lumenal. The helical transmembrane segment at 6–26 (FVQILFFLGVAAVGLVVAVMI) threads the bilayer. The Cytoplasmic segment spans residues 27–323 (ANADDTTLFD…GAWKIRDRRH (297 aa)).

It belongs to the glycosyltransferase 2 family.

It localises to the endoplasmic reticulum membrane. The catalysed reaction is a di-trans,poly-cis-dolichyl phosphate + UDP-alpha-D-glucose = a di-trans,poly-cis-dolichyl beta-D-glucosyl phosphate + UDP. It participates in protein modification; protein glycosylation. In terms of biological role, dolichyl-phosphate beta-glucosyltransferase involved in the glycosylation of glycoproteins through the synthesis of dolichyl beta-D-glucosyl phosphate which serves as a sugar donor for transfer of three glucose residues to the Man-9-GlcNAc-2-PP-dolichol precursor to N-glycans. In Trichomonas vaginalis (strain ATCC PRA-98 / G3), this protein is Dolichyl-phosphate beta-glucosyltransferase ALG5A.